The primary structure comprises 205 residues: Molybdenum cofactor guanylyltransferase (205 aa).

GTP is bound by residues L14 to G16, K27, D77, and D107. D107 lines the Mg(2+) pocket.

The protein belongs to the MobA family. Monomer. The cofactor is Mg(2+).

It localises to the cytoplasm. It carries out the reaction Mo-molybdopterin + GTP + H(+) = Mo-molybdopterin guanine dinucleotide + diphosphate. Its function is as follows. Transfers a GMP moiety from GTP to Mo-molybdopterin (Mo-MPT) cofactor (Moco or molybdenum cofactor) to form Mo-molybdopterin guanine dinucleotide (Mo-MGD) cofactor. The sequence is that of Molybdenum cofactor guanylyltransferase from Burkholderia cenocepacia (strain HI2424).